The chain runs to 367 residues: tRNA-specific 2-thiouridylase MnmA (367 aa).

Residues 13 to 20 (GLSGGVDS) and Met39 contribute to the ATP site. The segment at 99-101 (NPD) is interaction with target base in tRNA. The active-site Nucleophile is the Cys104. Cysteines 104 and 200 form a disulfide. ATP is bound at residue Gly128. Residues 150–152 (KDQ) are interaction with tRNA. The active-site Cysteine persulfide intermediate is the Cys200. Positions 307 to 308 (RY) are interaction with tRNA.

Belongs to the MnmA/TRMU family.

The protein localises to the cytoplasm. It carries out the reaction S-sulfanyl-L-cysteinyl-[protein] + uridine(34) in tRNA + AH2 + ATP = 2-thiouridine(34) in tRNA + L-cysteinyl-[protein] + A + AMP + diphosphate + H(+). Catalyzes the 2-thiolation of uridine at the wobble position (U34) of tRNA, leading to the formation of s(2)U34. The chain is tRNA-specific 2-thiouridylase MnmA from Neisseria meningitidis serogroup A / serotype 4A (strain DSM 15465 / Z2491).